The primary structure comprises 93 residues: Defensin-like protein 209 (93 aa).

Residues 1 to 19 form the signal peptide; sequence MKITILFLTLLVLSSSCTS. 3 cysteine pairs are disulfide-bonded: C63-C80, C66-C85, and C70-C87.

This sequence belongs to the DEFL family.

It is found in the secreted. In Arabidopsis thaliana (Mouse-ear cress), this protein is Defensin-like protein 209.